The primary structure comprises 133 residues: Small ribosomal subunit protein uS8 (133 aa).

Belongs to the universal ribosomal protein uS8 family. In terms of assembly, part of the 30S ribosomal subunit. Contacts proteins S5 and S12.

In terms of biological role, one of the primary rRNA binding proteins, it binds directly to 16S rRNA central domain where it helps coordinate assembly of the platform of the 30S subunit. This is Small ribosomal subunit protein uS8 from Crocosphaera subtropica (strain ATCC 51142 / BH68) (Cyanothece sp. (strain ATCC 51142)).